The following is a 322-amino-acid chain: Corticotropin-releasing factor-binding protein (322 aa).

The signal sequence occupies residues 1-24 (MSPNFKLQCHFTLILLTALRGESR). 5 cysteine pairs are disulfide-bonded: cysteine 60–cysteine 81, cysteine 104–cysteine 141, cysteine 183–cysteine 205, cysteine 237–cysteine 264, and cysteine 277–cysteine 318. Asparagine 204 carries N-linked (GlcNAc...) asparagine glycosylation.

Belongs to the CRF-binding protein family.

The protein resides in the secreted. In terms of biological role, binds CRF and inactivates it. May prevent inappropriate pituitary-adrenal stimulation in pregnancy. In Rattus norvegicus (Rat), this protein is Corticotropin-releasing factor-binding protein (Crhbp).